Consider the following 319-residue polypeptide: Thioredoxin reductase (319 aa).

37-44 contributes to the FAD binding site; that stretch reads ERGVPGGQ. Cys-136 and Cys-139 are joined by a disulfide. An FAD-binding site is contributed by 279 to 288; the sequence is DVRAKSLRQI.

Belongs to the class-II pyridine nucleotide-disulfide oxidoreductase family. Homodimer. Requires FAD as cofactor.

It localises to the cytoplasm. It catalyses the reaction [thioredoxin]-dithiol + NADP(+) = [thioredoxin]-disulfide + NADPH + H(+). The polypeptide is Thioredoxin reductase (trxB) (Listeria monocytogenes serovar 1/2a (strain ATCC BAA-679 / EGD-e)).